The following is a 318-amino-acid chain: Deoxyribose-phosphate aldolase (318 aa).

The active-site Proton donor/acceptor is Asp155. Catalysis depends on Lys218, which acts as the Schiff-base intermediate with acetaldehyde. Lys254 functions as the Proton donor/acceptor in the catalytic mechanism.

It belongs to the DeoC/FbaB aldolase family. DeoC type 2 subfamily. In terms of assembly, interacts with YBX1. Mainly expressed in liver, lung and colon.

The protein resides in the cytoplasm. It localises to the cytoplasmic granule. Its subcellular location is the nucleus. The catalysed reaction is 2-deoxy-D-ribose 5-phosphate = D-glyceraldehyde 3-phosphate + acetaldehyde. The protein operates within carbohydrate degradation; 2-deoxy-D-ribose 1-phosphate degradation; D-glyceraldehyde 3-phosphate and acetaldehyde from 2-deoxy-alpha-D-ribose 1-phosphate: step 2/2. Its function is as follows. Catalyzes a reversible aldol reaction between acetaldehyde and D-glyceraldehyde 3-phosphate to generate 2-deoxy-D-ribose 5-phosphate. Participates in stress granule (SG) assembly. May allow ATP production from extracellular deoxyinosine in conditions of energy deprivation. In Homo sapiens (Human), this protein is Deoxyribose-phosphate aldolase (DERA).